Reading from the N-terminus, the 375-residue chain is MSKGKIIVAMSGGVDSAVTAGLLMEDGYEVIGVNLRTWEYEAPACDTTKKSCCSPEDIRDARDVGISLKIPFYVIKMEKVFQEKVIDRFIEDYQHGKTPNPCVECNTFVKFGALFEKAKALGIDKIATGHYARIARNGERYAIANGIDVGKNQAYYLYGLSQENLKNVIFPLGEMTKPEVRQIARRMGLPVADKSESQEICFIPENDYRKFLEKKNVEFTPGFFKLKDGRIVGKHKGRENFTIGQRKGLGIAWKNPLYVISIEDDGSVILGEENETYNESFSVIDLNFQGLAPLNEGESLECRVQVRYRHIPIRCKITKMKEGLIVHPLEDVRGVTPGQSAVFYPLDSDYLLLGGIISKGSIQMRVAEPAISVLN.

ATP-binding positions include 9 to 16 (AMSGGVDS) and L35. The active-site Nucleophile is the C105. An intrachain disulfide couples C105 to C201. Position 129 (G129) interacts with ATP. Residues 151-153 (KNQ) form an interaction with tRNA region. The Cysteine persulfide intermediate role is filled by C201. Residues 307–308 (RY) are interaction with tRNA.

It belongs to the MnmA/TRMU family.

It localises to the cytoplasm. The enzyme catalyses S-sulfanyl-L-cysteinyl-[protein] + uridine(34) in tRNA + AH2 + ATP = 2-thiouridine(34) in tRNA + L-cysteinyl-[protein] + A + AMP + diphosphate + H(+). Catalyzes the 2-thiolation of uridine at the wobble position (U34) of tRNA, leading to the formation of s(2)U34. This chain is tRNA-specific 2-thiouridylase MnmA, found in Leptospira interrogans serogroup Icterohaemorrhagiae serovar copenhageni (strain Fiocruz L1-130).